Reading from the N-terminus, the 400-residue chain is MSESVRTNTSIWSKGMLSVIVAQFLSAFGDNALLFATLALLKAQFYPDWSQPVLQMVFVGAYILFAPFVGQIADSFAKGRVMMVANGLKLAGAAGICLGVNPFVGYTLVGIGAAAYSPAKYGILGELTTGDKLVKANGLMEASTIAAILLGSVAGGVLADWHVIAALVACALAYAGAVAANLFIPKLVAARPGQSWRLSAMTRSFFSACVVLWRNGETRFSLVGTGLFWGAGVTLRFLLVLWVPVALGITDNATPTYLNAMVAVGIVVGAGAAAKLVTLETVSRCMPAGILIGVVVAIFSLQHALLPAYALLLLIGMLGGFFVVPLNALLQERGKKSVGAGNAIAVQNLGENSAMLLMLGLYSLAVLVGVPAVAIGIGFGVLFALAIAALWIWQRRQASY.

Helical transmembrane passes span 19–39, 53–73, 91–111, 139–159, 164–184, 195–213, 227–247, 257–277, 281–301, 304–324, 352–372, and 373–393; these read VIVA…ATLA, VLQM…GQIA, AGAA…LVGI, LMEA…GVLA, IAAL…NLFI, SWRL…VVLW, LFWG…PVAL, YLNA…AKLV, TVSR…IFSL, ALLP…FFVV, NSAM…GVPA, and VAIG…LWIW.

The protein belongs to the major facilitator superfamily. LplT (TC 2.A.1.42) family.

It localises to the cell inner membrane. Catalyzes the facilitated diffusion of 2-acyl-glycero-3-phosphoethanolamine (2-acyl-GPE) into the cell. This is Lysophospholipid transporter LplT from Salmonella agona (strain SL483).